A 541-amino-acid chain; its full sequence is Putative nucleobase-ascorbate transporter 10 (541 aa).

12 consecutive transmembrane segments (helical) span residues 52–72, 79–99, 101–121, 141–161, 173–193, 196–216, 235–255, 299–319, 376–396, 397–417, 433–453, and 476–496; these read LLSL…MGGG, VIQT…FFGT, LPVI…IIYS, IQGA…LGVW, IAPL…PLLA, VEVG…LPRF, GMIL…SSGV, SFAM…LFYA, RVIQ…KFGA, FFAS…LCFV, FNIK…PQYF, and VIFM…DCTL.

The protein belongs to the nucleobase:cation symporter-2 (NCS2) (TC 2.A.40) family.

Its subcellular location is the membrane. This chain is Putative nucleobase-ascorbate transporter 10 (NAT10), found in Arabidopsis thaliana (Mouse-ear cress).